The primary structure comprises 283 residues: Non-selective voltage-gated ion channel VDAC1 (283 aa).

The residue at position 2 (Ala-2) is an N-acetylalanine. Lys-12 is a binding site for ATP. A Glycyl lysine isopeptide (Lys-Gly) (interchain with G-Cter in ubiquitin) cross-link involves residue Lys-12. Ser-13 carries the post-translational modification Phosphoserine. A Phosphothreonine modification is found at Thr-19. ATP is bound at residue Lys-20. At Lys-20 the chain carries N6-acetyllysine; alternate. Lys-20 is subject to N6-succinyllysine; alternate. Residue Lys-20 forms a Glycyl lysine isopeptide (Lys-Gly) (interchain with G-Cter in ubiquitin); alternate linkage. Transmembrane regions (beta stranded) follow at residues 26–35 (LIKLDLKTKS) and 39–47 (LEFTSSGSA). Glycyl lysine isopeptide (Lys-Gly) (interchain with G-Cter in ubiquitin) cross-links involve residues Lys-53 and Lys-61. The chain crosses the membrane as a beta stranded span at residues 54–64 (VTGSLETKYRW). The residue at position 67 (Tyr-67) is a Phosphotyrosine. The next 3 beta stranded transmembrane spans lie at 69 to 76 (LTFTEKWN), 80 to 89 (TLGTEITVED), and 95 to 104 (LKLTFDSSFS). At Thr-107 the chain carries Phosphothreonine. Residue Lys-109 is modified to N6-acetyllysine; alternate. A Glycyl lysine isopeptide (Lys-Gly) (interchain with G-Cter in ubiquitin); alternate cross-link involves residue Lys-109. Lys-110 participates in a covalent cross-link: Glycyl lysine isopeptide (Lys-Gly) (interchain with G-Cter in ubiquitin). 4 beta stranded membrane-spanning segments follow: residues 111–120 (NAKIKTGYKR), 123–130 (INLGCDVD), 137–145 (SIRGALVLG), and 150–158 (LAGYQMNFE). Lys-161 is covalently cross-linked (Glycyl lysine isopeptide (Lys-Gly) (interchain with G-Cter in ubiquitin)). Transmembrane regions (beta stranded) follow at residues 163–175 (RVTQ…GYKT), 178–185 (FQLHTNVN), 189–198 (EFGGSIYQKV), 202–211 (LETAVNLAWT), 218–227 (RFGIAAKYQI), and 231–238 (ACFSAKVN). Ser-193 carries the post-translational modification Phosphoserine; by NEK1. Ser-240 carries the phosphoserine modification. An NAD(+)-binding site is contributed by 242–244 (LIG). Residues 242-251 (LIGLGYTQTL) form a beta stranded membrane-spanning segment. N6-acetyllysine is present on Lys-252. A beta stranded transmembrane segment spans residues 254–263 (GIKLTLSALL). Residue 260 to 264 (SALLD) participates in NAD(+) binding. Lys-266 carries the post-translational modification N6-acetyllysine; alternate. Residue Lys-266 forms a Glycyl lysine isopeptide (Lys-Gly) (interchain with G-Cter in ubiquitin); alternate linkage. The beta stranded transmembrane segment at 273 to 282 (HKLGLGLEFQ) threads the bilayer. A Glycyl lysine isopeptide (Lys-Gly) (interchain with G-Cter in ubiquitin) cross-link involves residue Lys-274.

Belongs to the eukaryotic mitochondrial porin family. As to quaternary structure, homodimer and homotrimer; in response to cyclic AMP or calcium; oligomerization is required for scramblase activity. Component of the mitochondrial permeability transition pore complex (mPTPC), at least composed of SPG7, VDAC1 and PPIF. Interacts with SPG7, NIPSNAP2 and SLC25A30. Interacts with hexokinases including HK1. The HK1-VDAC1 complex interacts with ATF2. Interacts with BCL2L1. Interacts with BAK1. Interacts with RTL10/BOP (via BH3 domain). Interacts with amyloid-beta and APP; induces VDAC1 dephosphorylation. Interacts with TMEM41B. Interacts with BCAP31. Interacts with HSPA9; this interaction couples ITPR1 to VDAC1. In terms of processing, phosphorylation at Ser-193 by NEK1 promotes the closed conformational state preventing excessive mitochondrial membrane permeability and subsequent apoptotic cell death after injury. Phosphorylation by the AKT-GSK3B axis stabilizes the protein probably by preventing ubiquitin-mediated proteasomal degradation. Ubiquitinated. Undergoes monoubiquitination and polyubiquitination by PRKN; monoubiquitination at Lys-274 inhibits apoptosis, whereas polyubiquitination leads to its degradation and promotes mitophagy. Deubiquitinated by USP30. In terms of tissue distribution, predominantly in brain astrocytes.

The protein localises to the mitochondrion outer membrane. It is found in the cell membrane. The protein resides in the membrane raft. It carries out the reaction chloride(in) = chloride(out). The catalysed reaction is K(+)(in) = K(+)(out). It catalyses the reaction ATP(in) = ATP(out). The enzyme catalyses Ca(2+)(in) = Ca(2+)(out). It carries out the reaction Na(+)(in) = Na(+)(out). The catalysed reaction is Mg(2+)(in) = Mg(2+)(out). It catalyses the reaction L-glutamate(out) = L-glutamate(in). The enzyme catalyses dopamine(out) = dopamine(in). It carries out the reaction acetylcholine(in) = acetylcholine(out). The catalysed reaction is Fe(III)-[cytochrome c](out) = Fe(III)-[cytochrome c](in). It catalyses the reaction a 1,2-diacyl-sn-glycero-3-phosphocholine(in) = a 1,2-diacyl-sn-glycero-3-phosphocholine(out). The enzyme catalyses a 1,2-diacyl-sn-glycero-3-phospho-L-serine(in) = a 1,2-diacyl-sn-glycero-3-phospho-L-serine(out). Its activity is regulated as follows. Inhibited by nitric oxide. Non-selective voltage-gated ion channel that mediates the transport of anions and cations through the mitochondrion outer membrane and plasma membrane. The channel at the outer mitochondrial membrane allows diffusion of small hydrophilic molecules; in the plasma membrane it is involved in cell volume regulation and apoptosis. It adopts an open conformation at low or zero membrane potential and a closed conformation at potentials above 30-40 mV. The open state has a weak anion selectivity whereas the closed state is cation-selective. Binds various signaling molecules, including the sphingolipid ceramide, the phospholipid phosphatidylcholine, and the sterols cholesterol and oxysterol. In depolarized mitochondria, acts downstream of PRKN and PINK1 to promote mitophagy or prevent apoptosis; polyubiquitination by PRKN promotes mitophagy, while monoubiquitination by PRKN decreases mitochondrial calcium influx which ultimately inhibits apoptosis. May participate in the formation of the permeability transition pore complex (PTPC) responsible for the release of mitochondrial products that triggers apoptosis. May mediate ATP export from cells. Part of a complex composed of HSPA9, ITPR1 and VDAC1 that regulates mitochondrial calcium-dependent apoptosis by facilitating calcium transport from the ER lumen to the mitochondria intermembrane space thus providing calcium for the downstream calcium channel MCU that directly releases it into mitochondria matrix. Mediates cytochrome c efflux. Functionally, catalyzes the scrambling of phospholipids across the outer mitochondrial membrane; the mechanism is unrelated to channel activity and is capable of translocating both anionic and zwitterionic phospholipids. This is Non-selective voltage-gated ion channel VDAC1 from Bos taurus (Bovine).